The chain runs to 301 residues: Bifunctional protein FolD (301 aa).

NADP(+)-binding positions include 164 to 166 (GRS), Ser191, and Ile232.

This sequence belongs to the tetrahydrofolate dehydrogenase/cyclohydrolase family. In terms of assembly, homodimer.

It carries out the reaction (6R)-5,10-methylene-5,6,7,8-tetrahydrofolate + NADP(+) = (6R)-5,10-methenyltetrahydrofolate + NADPH. It catalyses the reaction (6R)-5,10-methenyltetrahydrofolate + H2O = (6R)-10-formyltetrahydrofolate + H(+). It functions in the pathway one-carbon metabolism; tetrahydrofolate interconversion. Functionally, catalyzes the oxidation of 5,10-methylenetetrahydrofolate to 5,10-methenyltetrahydrofolate and then the hydrolysis of 5,10-methenyltetrahydrofolate to 10-formyltetrahydrofolate. In Borreliella afzelii (strain PKo) (Borrelia afzelii), this protein is Bifunctional protein FolD.